A 1237-amino-acid chain; its full sequence is Anion exchange protein 2 (1237 aa).

The tract at residues 1–237 is disordered; that stretch reads MSSAPRRPAS…SYNLQERRRI (237 aa). The Cytoplasmic segment spans residues 1-704; the sequence is MSSAPRRPAS…DFRDALDPQC (704 aa). 2 stretches are compositionally biased toward basic and acidic residues: residues 37–49 and 58–75; these read ELHRTLGVERFEE and GGEEPGRSYGEEDFEYHR. Basic residues-rich tracts occupy residues 76–85 and 94–110; these read QSSHHIHHPL and RRRKTPQGPGRKSRRRP. Ser-113, Ser-132, Ser-144, Ser-170, and Ser-172 each carry phosphoserine. Residues 120-133 show a composition bias toward acidic residues; the sequence is TIEEGEEDEDEASE. Over residues 137–151 the composition is skewed to low complexity; that stretch reads ARAPTQPSPASTPSS. The span at 205-215 shows a compositional bias: gly residues; it reads GTAGGDDGGAS. A Phosphoserine modification is found at Ser-239. A Phosphothreonine modification is found at Thr-253. The residue at position 270 (Lys-270) is an N6-methyllysine. The tract at residues 286 to 316 is disordered; the sequence is RKNAKGSVQSGREGREPGPTPRARPRAPHKP. Ser-439 carries the post-translational modification Phosphoserine. The interval 445–466 is disordered; that stretch reads SLLGHHHGQGAESDPHVTEPLI. The interval 704-1237 is membrane (anion exchange); that stretch reads CLAAVIFIYF…DEYNEMPMPV (534 aa). 4 helical membrane passes run 705 to 725, 750 to 770, 792 to 812, and 822 to 842; these read LAAVIFIYFAALSPAITFGGL, FCLLGAQPLLVIGFSGPLLVF, IGFWLVLLALLMVALEGSFLV, and IFAFLISLIFIYETFYKLVKI. Residues 843–893 are Extracellular-facing; sequence FQEHPLHGCSVSNSSEADSGDNATWAGTRVTLGLGNGSSAGPAGQGRPRGQ. N-linked (GlcNAc...) asparagine glycosylation is found at Asn-855, Asn-864, and Asn-878. The chain crosses the membrane as a helical span at residues 894-914; it reads PNTALLSLVLMAGTFFIAFFL. Topologically, residues 915-929 are cytoplasmic; it reads RKFKNGRFFPGRVRR. A run of 5 helical transmembrane segments spans residues 930-950, 985-1005, 1032-1052, 1086-1106, and 1109-1129; these read VIGDFGVPIAILIMVLVDYSI, FPVWMMVASLLPAILVFILIF, LLLIVAMGGICALFGLPWLAA, RVTGLLVALLVGLSIVIGDLL, and IPLAVLFGIFLYMGVTSLNGI. Residue Cys-1169 is the site of S-palmitoyl cysteine attachment. The helical transmembrane segment at 1170 to 1190 threads the bilayer; sequence LALLWAVMSTAASLAFPFILI.

Belongs to the anion exchanger (TC 2.A.31) family.

It is found in the apical cell membrane. It localises to the basolateral cell membrane. The enzyme catalyses hydrogencarbonate(in) + chloride(out) = hydrogencarbonate(out) + chloride(in). Its function is as follows. Sodium-independent anion exchanger which mediates the electroneutral exchange of chloride for bicarbonate ions across the cell membrane. Plays an important role in osteoclast differentiation and function. Regulates bone resorption and calpain-dependent actin cytoskeleton organization in osteoclasts via anion exchange-dependent control of pH. Essential for intracellular pH regulation in CD8(+) T-cells upon CD3 stimulation, modulating CD8(+) T-cell response. The polypeptide is Anion exchange protein 2 (SLC4A2) (Equus caballus (Horse)).